The sequence spans 514 residues: Na(+)/H(+) antiporter NhaB (514 aa).

Transmembrane regions (helical) follow at residues 23–43 (LALL…SFVA), 52–72 (IFTL…LLAI), 97–117 (LLLM…LFIF), 120–140 (LLLS…AAAF), 144–164 (FLDA…FYGI), 202–222 (LMMH…VGEP), 238–258 (FFLR…LTCM), 303–323 (AIIG…VGLI), 357–377 (LTVF…APII), 391–411 (LFYL…VGTI), 447–467 (ATPN…APLI), and 475–495 (VWMA…CVEF).

The protein belongs to the NhaB Na(+)/H(+) (TC 2.A.34) antiporter family.

It localises to the cell inner membrane. It catalyses the reaction 2 Na(+)(in) + 3 H(+)(out) = 2 Na(+)(out) + 3 H(+)(in). In terms of biological role, na(+)/H(+) antiporter that extrudes sodium in exchange for external protons. The sequence is that of Na(+)/H(+) antiporter NhaB from Salmonella arizonae (strain ATCC BAA-731 / CDC346-86 / RSK2980).